The primary structure comprises 92 residues: Small ribosomal subunit protein uS19 (92 aa).

It belongs to the universal ribosomal protein uS19 family.

In terms of biological role, protein S19 forms a complex with S13 that binds strongly to the 16S ribosomal RNA. The chain is Small ribosomal subunit protein uS19 from Bradyrhizobium diazoefficiens (strain JCM 10833 / BCRC 13528 / IAM 13628 / NBRC 14792 / USDA 110).